Consider the following 165-residue polypeptide: Protoporphyrinogen IX oxidase (165 aa).

The next 4 membrane-spanning stretches (helical) occupy residues 26–46, 77–97, 99–119, and 145–165; these read LHVISVLAWMAGLFYLPRLFV, AMIATWIFGLLLVFTPGIVDW, MLWPWTKAACVLAMTGFHMWL, and PTLLMLVIVFSAVAKWNYWGF. Position 27 (His27) interacts with heme. Heme is bound at residue Lys105.

It belongs to the HemJ family. In terms of assembly, homodimer. Requires heme b as cofactor.

Its subcellular location is the cell membrane. The catalysed reaction is protoporphyrinogen IX + 3 A = protoporphyrin IX + 3 AH2. Its pathway is porphyrin-containing compound metabolism; protoporphyrin-IX biosynthesis; protoporphyrin-IX from protoporphyrinogen-IX: step 1/1. Its function is as follows. Catalyzes the oxidation of protoporphyrinogen IX to protoporphyrin IX. Is involved in the biosynthesis of tetrapyrrole molecules like heme and chlorophyll. Does not use oxygen or artificial electron acceptors such as menadione or benzoquinone. The sequence is that of Protoporphyrinogen IX oxidase from Cereibacter sphaeroides (strain ATCC 17023 / DSM 158 / JCM 6121 / CCUG 31486 / LMG 2827 / NBRC 12203 / NCIMB 8253 / ATH 2.4.1.) (Rhodobacter sphaeroides).